A 154-amino-acid chain; its full sequence is Ascorbate-specific PTS system EIIA component (154 aa).

The region spanning 6 to 150 is the PTS EIIA type-2 domain; the sequence is SLAVNKSIRL…QEVLDLIDRT (145 aa). The active-site Tele-phosphohistidine intermediate is the H68. Phosphohistidine is present on H68.

Its subcellular location is the cytoplasm. Its function is as follows. The phosphoenolpyruvate-dependent sugar phosphotransferase system (sugar PTS), a major carbohydrate active transport system, catalyzes the phosphorylation of incoming sugar substrates concomitantly with their translocation across the cell membrane. The enzyme II UlaABC PTS system is involved in ascorbate transport. The polypeptide is Ascorbate-specific PTS system EIIA component (ulaC) (Shigella dysenteriae serotype 1 (strain Sd197)).